The sequence spans 114 residues: Protein LLP homolog (114 aa).

Composition is skewed to basic residues over residues 1–21 (MAKS…RKKN) and 91–108 (QRKK…KSKL). 2 disordered regions span residues 1-23 (MAKS…KNAP) and 91-114 (QRKK…GLAW).

This sequence belongs to the learning-associated protein family.

It is found in the nucleus. It localises to the nucleolus. The protein localises to the chromosome. Functionally, regulates dendritic and spine growth and synaptic transmission. In Gallus gallus (Chicken), this protein is Protein LLP homolog (LLPH).